We begin with the raw amino-acid sequence, 345 residues long: S-adenosylmethionine:tRNA ribosyltransferase-isomerase (345 aa).

The protein belongs to the QueA family. As to quaternary structure, monomer.

It localises to the cytoplasm. The catalysed reaction is 7-aminomethyl-7-carbaguanosine(34) in tRNA + S-adenosyl-L-methionine = epoxyqueuosine(34) in tRNA + adenine + L-methionine + 2 H(+). The protein operates within tRNA modification; tRNA-queuosine biosynthesis. In terms of biological role, transfers and isomerizes the ribose moiety from AdoMet to the 7-aminomethyl group of 7-deazaguanine (preQ1-tRNA) to give epoxyqueuosine (oQ-tRNA). In Acidiphilium cryptum (strain JF-5), this protein is S-adenosylmethionine:tRNA ribosyltransferase-isomerase.